The primary structure comprises 1044 residues: Eukaryotic translation initiation factor 3 subunit A (1044 aa).

Residues 92–121 (LKKFIELAEKKVTEAQAKADEIQSSLESAA) adopt a coiled-coil conformation. A PCI domain is found at 339-523 (MTKAASFVLL…GVLTFDTDIF (185 aa)). A coiled-coil region spans residues 611-907 (IDKKKEAATD…EARRAARKAG (297 aa)). Residues 797–901 (SEKRHEEFEK…QREEEAEARR (105 aa)) are compositionally biased toward basic and acidic residues. The tract at residues 797-1044 (SEKRHEEFEK…WVPRWKQQQS (248 aa)) is disordered. Composition is skewed to low complexity over residues 943–956 (KEAAGGAAPAAAPA) and 1006–1017 (SSSSQPPSRTQT).

This sequence belongs to the eIF-3 subunit A family. Component of the eukaryotic translation initiation factor 3 (eIF-3) complex.

The protein resides in the cytoplasm. Its function is as follows. RNA-binding component of the eukaryotic translation initiation factor 3 (eIF-3) complex, which is involved in protein synthesis of a specialized repertoire of mRNAs and, together with other initiation factors, stimulates binding of mRNA and methionyl-tRNAi to the 40S ribosome. The eIF-3 complex specifically targets and initiates translation of a subset of mRNAs involved in cell proliferation. The polypeptide is Eukaryotic translation initiation factor 3 subunit A (tif32) (Aspergillus clavatus (strain ATCC 1007 / CBS 513.65 / DSM 816 / NCTC 3887 / NRRL 1 / QM 1276 / 107)).